A 426-amino-acid chain; its full sequence is Isocitrate dehydrogenase [NADP] (426 aa).

Residues Ser-123, Asn-125, Arg-129, Arg-139, and Arg-162 each coordinate D-threo-isocitrate. Asp-312 contributes to the Mg(2+) binding site. NADP(+) contacts are provided by residues 344–350 (HGTAWDI), Asn-357, and Lys-404.

It belongs to the isocitrate and isopropylmalate dehydrogenases family. Homodimer. Mg(2+) serves as cofactor. Requires Mn(2+) as cofactor.

It carries out the reaction D-threo-isocitrate + NADP(+) = 2-oxoglutarate + CO2 + NADPH. In terms of biological role, catalyzes the oxidative decarboxylation of isocitrate to 2-oxoglutarate and carbon dioxide with the concomitant reduction of NADP(+). The sequence is that of Isocitrate dehydrogenase [NADP] (icd) from Aquifex aeolicus (strain VF5).